Reading from the N-terminus, the 650-residue chain is Chaperone protein HtpG (650 aa).

The tract at residues 1–349 (MSKTVKKFET…SSDLPLNVSR (349 aa)) is a; substrate-binding. Positions 350–566 (EILQEDVQIK…EHGLNANMER (217 aa)) are b. The segment at 567–650 (ILRAMNQTVP…VADGKAAAGE (84 aa)) is c.

Belongs to the heat shock protein 90 family. Homodimer.

It localises to the cytoplasm. Functionally, molecular chaperone. Has ATPase activity. This Geobacter sulfurreducens (strain ATCC 51573 / DSM 12127 / PCA) protein is Chaperone protein HtpG.